The chain runs to 144 residues: Ribosomal RNA large subunit methyltransferase H (144 aa).

S-adenosyl-L-methionine is bound by residues Leu-63, Gly-92, and 111 to 116 (LSPLTF).

The protein belongs to the RNA methyltransferase RlmH family. Homodimer.

The protein resides in the cytoplasm. The catalysed reaction is pseudouridine(1915) in 23S rRNA + S-adenosyl-L-methionine = N(3)-methylpseudouridine(1915) in 23S rRNA + S-adenosyl-L-homocysteine + H(+). Its function is as follows. Specifically methylates the pseudouridine at position 1915 (m3Psi1915) in 23S rRNA. In Synechococcus sp. (strain CC9902), this protein is Ribosomal RNA large subunit methyltransferase H.